A 482-amino-acid polypeptide reads, in one-letter code: UDP-N-acetylmuramate--L-alanine ligase (482 aa).

ATP is bound at residue 123-129 (GTHGKTT).

It belongs to the MurCDEF family.

Its subcellular location is the cytoplasm. It carries out the reaction UDP-N-acetyl-alpha-D-muramate + L-alanine + ATP = UDP-N-acetyl-alpha-D-muramoyl-L-alanine + ADP + phosphate + H(+). The protein operates within cell wall biogenesis; peptidoglycan biosynthesis. Functionally, cell wall formation. This Pseudomonas entomophila (strain L48) protein is UDP-N-acetylmuramate--L-alanine ligase.